The chain runs to 106 residues: V-type proton ATPase subunit G2 (106 aa).

M1 bears the N-acetylmethionine mark. The tract at residues 31–67 is disordered; it reads LKQAKEEAETEVAEHKTSTEQGFQRKLEATSGDSGAN. Over residues 33–58 the composition is skewed to basic and acidic residues; sequence QAKEEAETEVAEHKTSTEQGFQRKLE.

This sequence belongs to the V-ATPase G subunit family. As to quaternary structure, V-ATPase is a heteromultimeric enzyme composed of a peripheral catalytic V1 complex (components A to H) attached to an integral membrane V0 proton pore complex (components: a, c, c'', d and e).

The protein resides in the vacuole membrane. Its function is as follows. Catalytic subunit of the peripheral V1 complex of vacuolar ATPase (V-ATPase). V-ATPase is responsible for acidifying a variety of intracellular compartments in eukaryotic cells. This Arabidopsis thaliana (Mouse-ear cress) protein is V-type proton ATPase subunit G2 (VHA-G2).